A 194-amino-acid chain; its full sequence is Cyclin-dependent kinase inhibitor 4 (194 aa).

Residues 49–58 (LELRSRRLEK) are compositionally biased toward basic and acidic residues. Disordered regions lie at residues 49 to 70 (LELR…PRRR) and 107 to 139 (TRET…SHCK).

This sequence belongs to the CDI family. ICK/KRP subfamily.

This is Cyclin-dependent kinase inhibitor 4 (KRP4) from Oryza sativa subsp. japonica (Rice).